The sequence spans 411 residues: LL-diaminopimelate aminotransferase (411 aa).

Substrate-binding residues include tyrosine 15 and glycine 42. Pyridoxal 5'-phosphate is bound by residues tyrosine 72, 108-109 (AK), tyrosine 132, asparagine 187, tyrosine 218, and 246-248 (SFS). Substrate is bound by residues lysine 109, tyrosine 132, and asparagine 187. Lysine 249 bears the N6-(pyridoxal phosphate)lysine mark. Pyridoxal 5'-phosphate contacts are provided by arginine 257 and asparagine 292. Substrate contacts are provided by asparagine 292 and arginine 388.

It belongs to the class-I pyridoxal-phosphate-dependent aminotransferase family. LL-diaminopimelate aminotransferase subfamily. In terms of assembly, homodimer. The cofactor is pyridoxal 5'-phosphate.

The catalysed reaction is (2S,6S)-2,6-diaminopimelate + 2-oxoglutarate = (S)-2,3,4,5-tetrahydrodipicolinate + L-glutamate + H2O + H(+). Its pathway is amino-acid biosynthesis; L-lysine biosynthesis via DAP pathway; LL-2,6-diaminopimelate from (S)-tetrahydrodipicolinate (aminotransferase route): step 1/1. In terms of biological role, involved in the synthesis of meso-diaminopimelate (m-DAP or DL-DAP), required for both lysine and peptidoglycan biosynthesis. Catalyzes the direct conversion of tetrahydrodipicolinate to LL-diaminopimelate. The polypeptide is LL-diaminopimelate aminotransferase (Crocosphaera subtropica (strain ATCC 51142 / BH68) (Cyanothece sp. (strain ATCC 51142))).